Consider the following 124-residue polypeptide: Large ribosomal subunit protein uL18 (124 aa).

This sequence belongs to the universal ribosomal protein uL18 family. Part of the 50S ribosomal subunit; part of the 5S rRNA/L5/L18/L25 subcomplex. Contacts the 5S and 23S rRNAs.

Functionally, this is one of the proteins that bind and probably mediate the attachment of the 5S RNA into the large ribosomal subunit, where it forms part of the central protuberance. This chain is Large ribosomal subunit protein uL18, found in Orientia tsutsugamushi (strain Boryong) (Rickettsia tsutsugamushi).